A 624-amino-acid chain; its full sequence is Alpha-galactosidase 3 (624 aa).

The first 22 residues, 1 to 22, serve as a signal peptide directing secretion; sequence MSPSAAVLIPLAAAVLLRPVVG. N-linked (GlcNAc...) asparagine glycans are attached at residues Asn-37, Asn-56, Asn-197, Asn-259, and Asn-293. Asp-347 (nucleophile) is an active-site residue. An N-linked (GlcNAc...) asparagine glycan is attached at Asn-393. Residue Asp-412 is the Proton donor of the active site. N-linked (GlcNAc...) asparagine glycosylation occurs at Asn-469.

Belongs to the glycosyl hydrolase 27 family.

It is found in the secreted. It carries out the reaction Hydrolysis of terminal, non-reducing alpha-D-galactose residues in alpha-D-galactosides, including galactose oligosaccharides, galactomannans and galactolipids.. In terms of biological role, alpha-galactosidase involved in the degradation of simple oligosaccharides like melibiose, raffinose and stachyose, and of polymeric galacto(gluco)mannans. This chain is Alpha-galactosidase 3 (agl3), found in Hypocrea jecorina (Trichoderma reesei).